The chain runs to 696 residues: MVESTKEFDYIKIKLASPFRILQWANRKLPNGQFVGEVQKSETINYRTFKPEMDGLFCERIFGPSKSLECACGKYKRVRYEGLICERCGVELTESRVRRHRMGYINLIYPVTHVWYINSRPNFMALLLEVEEFEKKLDTTYTTHSENCKKCDGLKLTTSTVVDLWDERVKRIKLASLAYFIAEDEISFYGIHWDLQQYRRSRELGYTGYPLKPYPKPQNRRYSTPKYLLRATPNFLIGAPLIKRELEKLNLKSEIFRMRYFILVCTKVLNKEKPIYDESRWFRKWEQQRIYKIREQAIKRIRILENLVGTGSSPAWMILTILPVIPPALRPMIQLEGGRFATSDLNELYRRIITRNNRLLRLLEIDAPQLIIRNEKRLLQEAVDTLIDNGKRGKIALSANNRPLKSLSDIIKGKHGRFRQNLLGKRVDYSGRSVIVVGPSLRLNQCGLPYEMAIELFQPFIIRELINQGLASNMKIAKNLIQQNESIIDPVLEKVLKSHPIFLNRAPTLHRLGIQAFEPILVQGRAIKLHPLVCSAFNADFDGDQMAVHIPLSLEAQAECYMLMLAPYNFLSPANGEPIIMPSQDMVLGCYYLTVNNINGLLGSSHYFANLADVILAYSQSKLEIHSAIWIRLEEQEINESILLKTTILDDETKIEFYENLQIRKTKDNQLIVQYVQTTTGRAILNYIIQKTLNFL.

The Zn(2+) site is built by Cys-70, Cys-72, Cys-85, and Cys-88. Residues Asp-540, Asp-542, and Asp-544 each coordinate Mg(2+).

The protein belongs to the RNA polymerase beta' chain family. RpoC1 subfamily. In terms of assembly, in plastids the minimal PEP RNA polymerase catalytic core is composed of four subunits: alpha, beta, beta', and beta''. When a (nuclear-encoded) sigma factor is associated with the core the holoenzyme is formed, which can initiate transcription. The cofactor is Mg(2+). Zn(2+) serves as cofactor.

Its subcellular location is the plastid. It is found in the chloroplast. The enzyme catalyses RNA(n) + a ribonucleoside 5'-triphosphate = RNA(n+1) + diphosphate. Its function is as follows. DNA-dependent RNA polymerase catalyzes the transcription of DNA into RNA using the four ribonucleoside triphosphates as substrates. The polypeptide is DNA-directed RNA polymerase subunit beta' (Phaeodactylum tricornutum (strain CCAP 1055/1)).